Consider the following 85-residue polypeptide: Large ribosomal subunit protein bL27 (85 aa).

Residues methionine 1–arginine 20 form a disordered region.

Belongs to the bacterial ribosomal protein bL27 family.

In Actinobacillus pleuropneumoniae serotype 5b (strain L20), this protein is Large ribosomal subunit protein bL27.